Here is a 265-residue protein sequence, read N- to C-terminus: Hydroxyethylthiazole kinase 2 (265 aa).

Position 39 (methionine 39) interacts with substrate. Lysine 115 and threonine 168 together coordinate ATP. A substrate-binding site is contributed by glycine 195.

The protein belongs to the Thz kinase family. It depends on Mg(2+) as a cofactor.

It carries out the reaction 5-(2-hydroxyethyl)-4-methylthiazole + ATP = 4-methyl-5-(2-phosphooxyethyl)-thiazole + ADP + H(+). It functions in the pathway cofactor biosynthesis; thiamine diphosphate biosynthesis; 4-methyl-5-(2-phosphoethyl)-thiazole from 5-(2-hydroxyethyl)-4-methylthiazole: step 1/1. In terms of biological role, catalyzes the phosphorylation of the hydroxyl group of 4-methyl-5-beta-hydroxyethylthiazole (THZ). In Clostridium botulinum (strain Langeland / NCTC 10281 / Type F), this protein is Hydroxyethylthiazole kinase 2.